Consider the following 71-residue polypeptide: MKFLNILTLAFITGMASAAAVPGGTTTNDAASTLDNLNNKRSVCGQLCFNNKDCGGPCPKCNTKEGVCVKK.

The first 18 residues, 1–18 (MKFLNILTLAFITGMASA), serve as a signal peptide directing secretion. 3 cysteine pairs are disulfide-bonded: Cys-44–Cys-58, Cys-48–Cys-61, and Cys-54–Cys-68.

The protein belongs to the UPF0499 family.

Its subcellular location is the secreted. The protein is UPF0499 protein ACLA_083080 of Aspergillus clavatus (strain ATCC 1007 / CBS 513.65 / DSM 816 / NCTC 3887 / NRRL 1 / QM 1276 / 107).